Consider the following 158-residue polypeptide: Cyclic pyranopterin monophosphate synthase (158 aa).

Residues 76–78 (LCH) and 114–115 (ME) each bind substrate. The active site involves D129.

This sequence belongs to the MoaC family. Homohexamer; trimer of dimers.

The enzyme catalyses (8S)-3',8-cyclo-7,8-dihydroguanosine 5'-triphosphate = cyclic pyranopterin phosphate + diphosphate. The protein operates within cofactor biosynthesis; molybdopterin biosynthesis. In terms of biological role, catalyzes the conversion of (8S)-3',8-cyclo-7,8-dihydroguanosine 5'-triphosphate to cyclic pyranopterin monophosphate (cPMP). The polypeptide is Cyclic pyranopterin monophosphate synthase (Brucella anthropi (strain ATCC 49188 / DSM 6882 / CCUG 24695 / JCM 21032 / LMG 3331 / NBRC 15819 / NCTC 12168 / Alc 37) (Ochrobactrum anthropi)).